Reading from the N-terminus, the 71-residue chain is Large ribosomal subunit protein bL31 (71 aa).

4 residues coordinate Zn(2+): cysteine 16, cysteine 18, cysteine 37, and cysteine 40.

It belongs to the bacterial ribosomal protein bL31 family. Type A subfamily. In terms of assembly, part of the 50S ribosomal subunit. Zn(2+) serves as cofactor.

In terms of biological role, binds the 23S rRNA. This Actinobacillus succinogenes (strain ATCC 55618 / DSM 22257 / CCUG 43843 / 130Z) protein is Large ribosomal subunit protein bL31.